Reading from the N-terminus, the 2596-residue chain is Cadherin EGF LAG seven-pass G-type receptor fmi-1 (2596 aa).

Residues 1–22 (MMLDRIMFLLFFILSLVIGSFS) form the signal peptide. Residues 23-2229 (EYLDDKYYST…IVRVAQMDNM (2207 aa)) are Extracellular-facing. 8 consecutive Cadherin domains span residues 166 to 270 (QQEK…SPIF), 271 to 375 (EKDS…APVF), 376 to 479 (ASDS…APTL), 480 to 581 (IAAQ…APTF), 582 to 682 (DKKE…APYF), 683 to 784 (NDHP…SPQF), 785 to 892 (TSSS…APTF), and 893 to 1000 (EQLS…KPAL). Residues Asn381, Asn387, Asn562, Asn587, Asn765, and Asn824 are each glycosylated (N-linked (GlcNAc...) asparagine). 2 N-linked (GlcNAc...) asparagine glycosylation sites follow: Asn1030 and Asn1263. The EGF-like 1 domain occupies 1251–1287 (RIDECYRGRCSNNSTCVAFENTYQCECKPGWIGRHCE). Cystine bridges form between Cys1255–Cys1266, Cys1260–Cys1275, Cys1277–Cys1286, Cys1497–Cys1526, Cys1533–Cys1546, Cys1540–Cys1555, Cys1557–Cys1567, Cys1709–Cys1732, Cys1738–Cys1750, Cys1744–Cys1759, Cys1761–Cys1770, and Cys1780–Cys1785. A Laminin G-like 1 domain is found at 1333 to 1526 (SVSFDGEGLL…HKVGQVHEGC (194 aa)). The 40-residue stretch at 1529 to 1568 (RKDFCSTSDGQCSATSKCVNRWGGRICSCPQSVHSTGECV) folds into the EGF-like 2 domain. The 156-residue stretch at 1577–1732 (RGHSLFEEES…KKKGKTRAGC (156 aa)) folds into the Laminin G-like 2 domain. 2 EGF-like domains span residues 1734-1771 (VPNRCSVDSICPAESTCHRAWNKHKCKCHKSFVGDTCL) and 1776-1808 (VANVCSSGTCVSSNTTAGYECICPAGKTGKNCQ). A glycan (N-linked (GlcNAc...) asparagine) is linked at Asn1789. An intrachain disulfide couples Cys1798 to Cys1807. N-linked (GlcNAc...) asparagine glycans are attached at residues Asn1965, Asn1992, Asn2152, Asn2195, and Asn2228. The 166-residue stretch at 2054–2219 (EYSTLISKLW…TMFVNDQSSS (166 aa)) folds into the GAIN-B domain. The cysteines at positions 2174 and 2201 are disulfide-linked. The segment at 2174 to 2219 (CVRFDEKSGTWTARGAALIGLNLTHAACEYNRIGVFTMFVNDQSSS) is GPS. The chain crosses the membrane as a helical span at residues 2230–2250 (TSPAIAGVALFLCFLSILLTL). Residues 2251–2261 (SRRSLKTHSVR) lie on the Cytoplasmic side of the membrane. A helical membrane pass occupies residues 2262–2282 (IGFILFFAINILNLFFVHKTA). Over 2283–2292 (INQAYCPVRN) the chain is Extracellular. A helical membrane pass occupies residues 2293 to 2313 (AMLSFTSSAPFAWLFLYGLYI). Over 2314-2326 (YRMLADGSSSPSL) the chain is Cytoplasmic. A helical transmembrane segment spans residues 2327-2347 (TTSLLVGIVFPCLISFTTFFV). At 2348–2356 (TDQCSLSPH) the chain is on the extracellular side. Residues 2357–2377 (LWLFWCIILPIGLFLLLSFYA) traverse the membrane as a helical segment. Residues 2378-2401 (AATSVLVSLHKKYDVFVAKYNVKR) are Cytoplasmic-facing. The helical transmembrane segment at 2402 to 2422 (AVFQHFILTIFTLGMTLTGLF) threads the bilayer. Topologically, residues 2423–2437 (ANQLPLPMEIMEISQ) are extracellular. The chain crosses the membrane as a helical span at residues 2438–2458 (SIIYLIAALVIFLWCVCDITT). Over 2459–2596 (KASDSNPSMW…KNTTSTFNRE (138 aa)) the chain is Cytoplasmic.

This sequence belongs to the G-protein coupled receptor 2 family. LN-TM7 subfamily. Expressed in a region of neuropil around the nerve ring and the ventral cord (at protein level). Expressed in the head, tail, ventral cord, nerve ring and neurons including HSN neurons. Expressed in DA, VA, and VB and weakly in the DB cholinergic neurons. Not expressed in ventral D-type GABAergic motorneurons.

The protein localises to the cell membrane. It localises to the cell projection. The protein resides in the axon. It is found in the dendrite. Its function is as follows. During ventral cord development, required for axon fasciculation and navigation, mediating both pioneer and follower axon extension, guidance and track formation. Acts in CEPsh glia and SubL neurons to guide follower axons into the nerve ring. Promotes motorneuron development by positively regulating the extension of the anterior neurite of ventral D-type GABAergic motorneurons along the anterior-posterior axis of the ventral nerve cord. Plays a role in synaptogenesis by regulating synaptic vesicle accumulation at GABAergic and cholinergic neuromuscular junctions. The protein is Cadherin EGF LAG seven-pass G-type receptor fmi-1 of Caenorhabditis elegans.